A 167-amino-acid chain; its full sequence is NADH-quinone oxidoreductase subunit B 1 (167 aa).

[4Fe-4S] cluster is bound by residues C38, C39, C104, and C133.

Belongs to the complex I 20 kDa subunit family. As to quaternary structure, NDH-1 is composed of 14 different subunits. Subunits NuoB, C, D, E, F, and G constitute the peripheral sector of the complex. [4Fe-4S] cluster serves as cofactor.

Its subcellular location is the cell membrane. It carries out the reaction a quinone + NADH + 5 H(+)(in) = a quinol + NAD(+) + 4 H(+)(out). Its function is as follows. NDH-1 shuttles electrons from NADH, via FMN and iron-sulfur (Fe-S) centers, to quinones in the respiratory chain. The immediate electron acceptor for the enzyme in this species is believed to be ubiquinone. Couples the redox reaction to proton translocation (for every two electrons transferred, four hydrogen ions are translocated across the cytoplasmic membrane), and thus conserves the redox energy in a proton gradient. The polypeptide is NADH-quinone oxidoreductase subunit B 1 (Roseiflexus castenholzii (strain DSM 13941 / HLO8)).